Consider the following 548-residue polypeptide: Membrane protein insertase YidC (548 aa).

A helical membrane pass occupies residues 6–26 (NLLVIALLFVSFMIWQAWEQD). A disordered region spans residues 28–56 (NPQPQTQQTTQTTTTAAGSAADQGVPASG). Positions 29–42 (PQPQTQQTTQTTTT) are enriched in low complexity. 4 helical membrane-spanning segments follow: residues 350–370 (FVGN…GIMY), 424–444 (FPLI…MGSI), 458–478 (LSAQ…MFFI), and 499–519 (PVIF…YYIV).

Belongs to the OXA1/ALB3/YidC family. Type 1 subfamily. As to quaternary structure, interacts with the Sec translocase complex via SecD. Specifically interacts with transmembrane segments of nascent integral membrane proteins during membrane integration.

Its subcellular location is the cell inner membrane. Functionally, required for the insertion and/or proper folding and/or complex formation of integral membrane proteins into the membrane. Involved in integration of membrane proteins that insert both dependently and independently of the Sec translocase complex, as well as at least some lipoproteins. Aids folding of multispanning membrane proteins. The polypeptide is Membrane protein insertase YidC (Salmonella typhimurium (strain LT2 / SGSC1412 / ATCC 700720)).